The sequence spans 444 residues: Phosphoglucosamine mutase (444 aa).

The Phosphoserine intermediate role is filled by S100. Mg(2+) contacts are provided by S100, D240, D242, and D244. S100 is modified (phosphoserine).

The protein belongs to the phosphohexose mutase family. Mg(2+) is required as a cofactor. Post-translationally, activated by phosphorylation.

The catalysed reaction is alpha-D-glucosamine 1-phosphate = D-glucosamine 6-phosphate. Catalyzes the conversion of glucosamine-6-phosphate to glucosamine-1-phosphate. The chain is Phosphoglucosamine mutase from Desulforamulus reducens (strain ATCC BAA-1160 / DSM 100696 / MI-1) (Desulfotomaculum reducens).